Here is a 310-residue protein sequence, read N- to C-terminus: tRNA-cytidine(32) 2-sulfurtransferase (310 aa).

Positions Ser48–Ser53 match the PP-loop motif motif. Residues Cys123, Cys126, and Cys214 each contribute to the [4Fe-4S] cluster site.

Belongs to the TtcA family. In terms of assembly, homodimer. It depends on Mg(2+) as a cofactor. [4Fe-4S] cluster is required as a cofactor.

The protein localises to the cytoplasm. The catalysed reaction is cytidine(32) in tRNA + S-sulfanyl-L-cysteinyl-[cysteine desulfurase] + AH2 + ATP = 2-thiocytidine(32) in tRNA + L-cysteinyl-[cysteine desulfurase] + A + AMP + diphosphate + H(+). Its pathway is tRNA modification. Catalyzes the ATP-dependent 2-thiolation of cytidine in position 32 of tRNA, to form 2-thiocytidine (s(2)C32). The sulfur atoms are provided by the cysteine/cysteine desulfurase (IscS) system. In Vibrio cholerae serotype O1 (strain ATCC 39315 / El Tor Inaba N16961), this protein is tRNA-cytidine(32) 2-sulfurtransferase.